A 1142-amino-acid chain; its full sequence is E3 ubiquitin-protein ligase TRIM33 (1142 aa).

A compositionally biased stretch (gly residues) spans 1–18 (MAENKGGGEAESGGGGSG). The tract at residues 1–132 (MAENKGGGEA…PGSSSGPPLG (132 aa)) is disordered. Positions 1-163 (MAENKGGGEA…AEPKLLPCLH (163 aa)) are necessary for E3 ubiquitin-protein ligase activity and repression of SMAD4 signaling and transcriptional repression. Positions 19 to 42 (SAPVTAGAAGPTAQEAEPPLAAVL) are enriched in low complexity. A compositionally biased stretch (gly residues) spans 52–64 (RAGAEGGAAGPDD). Residues 65–99 (GGVAAASSSSAPAASVPAASVGSAVPGGAASTPAP) show a composition bias toward low complexity. Residues 100 to 122 (AAAPAPAPAPAPAPAPAPAPAPA) show a composition bias toward pro residues. The RING-type zinc finger occupies 141-201 (CAVCQQSLQS…VGVIRCPVCR (61 aa)). 2 B box-type zinc fingers span residues 228–275 (KSEQ…IRKK) and 287–328 (QRPV…YQFL). C233, C236, C257, H261, C292, H295, C315, and H320 together coordinate Zn(2+). Residues 315-417 (CQLLEHKEHR…QMKLLQQQND (103 aa)) form a necessary for oligomerization region. Positions 315-417 (CQLLEHKEHR…QMKLLQQQND (103 aa)) form a coiled coil. Residues K345, K350, K497, and K520 each participate in a glycyl lysine isopeptide (Lys-Gly) (interchain with G-Cter in SUMO2) cross-link. R531 carries the asymmetric dimethylarginine; alternate modification. R531 is modified (omega-N-methylarginine; alternate). Residue K543 forms a Glycyl lysine isopeptide (Lys-Gly) (interchain with G-Cter in SUMO2) linkage. An Omega-N-methylarginine modification is found at R551. R593 is modified (asymmetric dimethylarginine). Asymmetric dimethylarginine; alternate is present on R607. At R607 the chain carries Omega-N-methylarginine; alternate. R614 and R620 each carry asymmetric dimethylarginine. Disordered regions lie at residues 657-676 (PTSP…TSPS), 688-707 (NPEN…EDAG), and 718-834 (YISG…PPLS). Residues 738-774 (PSALSPGSSGLSNSHTPVRPPSTSSTGSRGSCGSSGR) are compositionally biased toward low complexity. Composition is skewed to basic and acidic residues over residues 775–794 (TAEK…KQEP) and 808–817 (KQEKTEDGRR). 2 positions are modified to N6-acetyllysine; alternate: K778 and K784. Glycyl lysine isopeptide (Lys-Gly) (interchain with G-Cter in SUMO2); alternate cross-links involve residues K778 and K784. Residue K789 forms a Glycyl lysine isopeptide (Lys-Gly) (interchain with G-Cter in SUMO2) linkage. Residues K791 and K808 each participate in a glycyl lysine isopeptide (Lys-Gly) (interchain with G-Cter in SUMO2); alternate cross-link. Glycyl lysine isopeptide (Lys-Gly) (interchain with G-Cter in SUMO1); alternate cross-links involve residues K791 and K808. Position 808 is an N6-acetyllysine; alternate (K808). Residue K811 forms a Glycyl lysine isopeptide (Lys-Gly) (interchain with G-Cter in SUMO2) linkage. S818 carries the phosphoserine modification. The span at 822–834 (LSSPESSLTPPLS) shows a compositional bias: low complexity. At T830 the chain carries Phosphothreonine. K876 participates in a covalent cross-link: Glycyl lysine isopeptide (Lys-Gly) (interchain with G-Cter in SUMO2). Position 877 is a phosphoserine (S877). The PHD-type zinc finger occupies 902–949 (EDWCAVCQNGGDLLCCEKCPKVFHLTCHVPTLLSFPSGDWICTFCRDI). N6-acetyllysine is present on K966. K968 carries the post-translational modification N6-acetyllysine; alternate. Residue K968 forms a Glycyl lysine isopeptide (Lys-Gly) (interchain with G-Cter in SUMO2); alternate linkage. Residues 972-1095 (GLSPVDQRKC…LYFEDKLSEI (124 aa)) form the Bromo domain. Glycyl lysine isopeptide (Lys-Gly) (interchain with G-Cter in SUMO2) cross-links involve residues K1022 and K1058. At T1066 the chain carries Phosphothreonine. K1072 participates in a covalent cross-link: Glycyl lysine isopeptide (Lys-Gly) (interchain with G-Cter in SUMO2). A disordered region spans residues 1103–1142 (PLPEFEQDEDDGEVTEDSDEDFIQPRRKRLKSDERPVHIK). Residues 1107–1124 (FEQDEDDGEVTEDSDEDF) are compositionally biased toward acidic residues. Residue T1117 is modified to Phosphothreonine. Residue S1120 is modified to Phosphoserine. Residue K1133 forms a Glycyl lysine isopeptide (Lys-Gly) (interchain with G-Cter in SUMO2) linkage. Residues 1133-1142 (KSDERPVHIK) are compositionally biased toward basic and acidic residues. Phosphoserine is present on S1134.

The protein belongs to the TRIM/RBCC family. Homooligomer and heterooligomer with TRIM24 and TRIM28 family members. Interacts with SMAD4 in unstimulated cells. Found in a complex with SMAD2 and SMAD3 upon addition of TGF-beta. Interacts with SMAD2 and SMAD3. Interacts with SMAD4 under basal and induced conditions and, upon TGF-beta signaling, with activated SMAD2. Forms a ternary complex with SMAD4 and SMAD2 upon TGF-beta signaling. Sumoylated with SUMO1. In terms of tissue distribution, ubiquitous with high level in testis.

The protein localises to the nucleus. The enzyme catalyses S-ubiquitinyl-[E2 ubiquitin-conjugating enzyme]-L-cysteine + [acceptor protein]-L-lysine = [E2 ubiquitin-conjugating enzyme]-L-cysteine + N(6)-ubiquitinyl-[acceptor protein]-L-lysine.. The protein operates within protein modification; protein ubiquitination. Acts as an E3 ubiquitin-protein ligase. Promotes SMAD4 ubiquitination, nuclear exclusion and degradation via the ubiquitin proteasome pathway. May act as a transcriptional repressor. Inhibits the transcriptional response to TGF-beta/BMP signaling cascade. Plays a role in the control of cell proliferation. Its association with SMAD2 and SMAD3 stimulates erythroid differentiation of hematopoietic stem/progenitor. Monoubiquitinates SMAD4 and acts as an inhibitor of SMAD4-dependent TGF-beta/BMP signaling cascade (Monoubiquitination of SMAD4 hampers its ability to form a stable complex with activated SMAD2/3 resulting in inhibition of TGF-beta/BMP signaling cascade). The sequence is that of E3 ubiquitin-protein ligase TRIM33 (Trim33) from Mus musculus (Mouse).